A 425-amino-acid polypeptide reads, in one-letter code: Spermatogenesis- and oogenesis-specific basic helix-loop-helix-containing protein 2 (425 aa).

A bHLH domain is found at 201–252 (KISLLHSSKEKLRRERIKYCCEQLRTLLPYVKGRKNDAASVLEATVDYVKYI).

As to quaternary structure, forms both hetero- and homodimers with SOHLH1.

Its subcellular location is the nucleus. It is found in the cytoplasm. Transcription regulator of both male and female germline differentiation. Suppresses genes involved in spermatogonial stem cells maintenance, and induces genes important for spermatogonial differentiation. Coordinates oocyte differentiation without affecting meiosis I. In Homo sapiens (Human), this protein is Spermatogenesis- and oogenesis-specific basic helix-loop-helix-containing protein 2 (SOHLH2).